Consider the following 491-residue polypeptide: (R)-citramalate synthase CimA (491 aa).

The 252-residue stretch at 3-254 (VRIFDTTLRD…DTKIKMEKLY (252 aa)) folds into the Pyruvate carboxyltransferase domain.

The protein belongs to the alpha-IPM synthase/homocitrate synthase family. In terms of assembly, homodimer.

The enzyme catalyses pyruvate + acetyl-CoA + H2O = (3R)-citramalate + CoA + H(+). The protein operates within amino-acid biosynthesis; L-isoleucine biosynthesis; 2-oxobutanoate from pyruvate: step 1/3. In terms of biological role, catalyzes the condensation of pyruvate and acetyl-coenzyme A to form (R)-citramalate. This Methanocaldococcus jannaschii (strain ATCC 43067 / DSM 2661 / JAL-1 / JCM 10045 / NBRC 100440) (Methanococcus jannaschii) protein is (R)-citramalate synthase CimA (cimA).